The chain runs to 250 residues: Ditrans,polycis-undecaprenyl-diphosphate synthase ((2E,6E)-farnesyl-diphosphate specific) (250 aa).

Asp-20 is a catalytic residue. Mg(2+) is bound at residue Asp-20. Substrate is bound by residues 21–24 (GNGR), Trp-25, Arg-33, His-37, and 65–67 (SSE). The Proton acceptor role is filled by Asn-68. Residues Trp-69, Arg-71, Arg-188, and 194–196 (RIS) each bind substrate. Glu-207 is a binding site for Mg(2+).

The protein belongs to the UPP synthase family. Homodimer. Mg(2+) is required as a cofactor.

The catalysed reaction is 8 isopentenyl diphosphate + (2E,6E)-farnesyl diphosphate = di-trans,octa-cis-undecaprenyl diphosphate + 8 diphosphate. Catalyzes the sequential condensation of isopentenyl diphosphate (IPP) with (2E,6E)-farnesyl diphosphate (E,E-FPP) to yield (2Z,6Z,10Z,14Z,18Z,22Z,26Z,30Z,34E,38E)-undecaprenyl diphosphate (di-trans,octa-cis-UPP). UPP is the precursor of glycosyl carrier lipid in the biosynthesis of bacterial cell wall polysaccharide components such as peptidoglycan and lipopolysaccharide. The protein is Ditrans,polycis-undecaprenyl-diphosphate synthase ((2E,6E)-farnesyl-diphosphate specific) of Vibrio cholerae serotype O1 (strain ATCC 39315 / El Tor Inaba N16961).